Reading from the N-terminus, the 63-residue chain is ATP synthase F(0) complex subunit 8 (63 aa).

The chain crosses the membrane as a helical span at residues 8–24 (MWLLTILSMLLTLFVLF). N6-acetyllysine is present on K57.

It belongs to the ATPase protein 8 family. As to quaternary structure, component of the ATP synthase complex composed at least of ATP5F1A/subunit alpha, ATP5F1B/subunit beta, ATP5MC1/subunit c (homooctomer), MT-ATP6/subunit a, MT-ATP8/subunit 8, ATP5ME/subunit e, ATP5MF/subunit f, ATP5MG/subunit g, ATP5MK/subunit k, ATP5MJ/subunit j, ATP5F1C/subunit gamma, ATP5F1D/subunit delta, ATP5F1E/subunit epsilon, ATP5PF/subunit F6, ATP5PB/subunit b, ATP5PD/subunit d, ATP5PO/subunit OSCP. ATP synthase complex consists of a soluble F(1) head domain (subunits alpha(3) and beta(3)) - the catalytic core - and a membrane F(0) domain - the membrane proton channel (subunits c, a, 8, e, f, g, k and j). These two domains are linked by a central stalk (subunits gamma, delta, and epsilon) rotating inside the F1 region and a stationary peripheral stalk (subunits F6, b, d, and OSCP). Interacts with PRICKLE3.

It localises to the mitochondrion membrane. Subunit 8, of the mitochondrial membrane ATP synthase complex (F(1)F(0) ATP synthase or Complex V) that produces ATP from ADP in the presence of a proton gradient across the membrane which is generated by electron transport complexes of the respiratory chain. ATP synthase complex consist of a soluble F(1) head domain - the catalytic core - and a membrane F(1) domain - the membrane proton channel. These two domains are linked by a central stalk rotating inside the F(1) region and a stationary peripheral stalk. During catalysis, ATP synthesis in the catalytic domain of F(1) is coupled via a rotary mechanism of the central stalk subunits to proton translocation. In vivo, can only synthesize ATP although its ATP hydrolase activity can be activated artificially in vitro. Part of the complex F(0) domain. The chain is ATP synthase F(0) complex subunit 8 from Balaenoptera physalus (Fin whale).